The chain runs to 258 residues: Ditrans,polycis-undecaprenyl-diphosphate synthase ((2E,6E)-farnesyl-diphosphate specific) (258 aa).

The active site involves aspartate 24. Aspartate 24 serves as a coordination point for Mg(2+). Residues glycine 25–arginine 28, tryptophan 29, arginine 37, histidine 41, and serine 69–glutamate 71 each bind substrate. Asparagine 72 serves as the catalytic Proton acceptor. Residues tryptophan 73, arginine 75, arginine 192, and arginine 198–serine 200 contribute to the substrate site. Residue glutamate 211 coordinates Mg(2+).

It belongs to the UPP synthase family. In terms of assembly, homodimer. Requires Mg(2+) as cofactor.

The enzyme catalyses 8 isopentenyl diphosphate + (2E,6E)-farnesyl diphosphate = di-trans,octa-cis-undecaprenyl diphosphate + 8 diphosphate. Functionally, catalyzes the sequential condensation of isopentenyl diphosphate (IPP) with (2E,6E)-farnesyl diphosphate (E,E-FPP) to yield (2Z,6Z,10Z,14Z,18Z,22Z,26Z,30Z,34E,38E)-undecaprenyl diphosphate (di-trans,octa-cis-UPP). UPP is the precursor of glycosyl carrier lipid in the biosynthesis of bacterial cell wall polysaccharide components such as peptidoglycan and lipopolysaccharide. This chain is Ditrans,polycis-undecaprenyl-diphosphate synthase ((2E,6E)-farnesyl-diphosphate specific), found in Xanthomonas oryzae pv. oryzae (strain KACC10331 / KXO85).